A 278-amino-acid polypeptide reads, in one-letter code: MPSPSSHTELPDSSSLRHILAVAHSPLAEPGVARTLATELGLDWLGVVAPKQVRDYGLLLFMDEHGLALQQTGKGAPGPVRAEFVSGKMGYRREHGGGAGQLVARAVGMQKTRAPLQVLDATAGLGQDAFVLASLGCQMTLFERNPIIHALLADGLYRASLNEACAPIVARMTLHSGNSLDWMNQAGPEAVDVVYLDPMFPHRDKSALVKKEMQVFRQVVGDDDDASQLLEAALGCARYRVVVKRPRKAPAIAGPEPAARVEGKSSRYDIYPIRALPA.

Residues 143-144 (ER) and Asp-197 contribute to the S-adenosyl-L-methionine site.

This sequence belongs to the methyltransferase superfamily. RsmJ family.

The protein resides in the cytoplasm. It carries out the reaction guanosine(1516) in 16S rRNA + S-adenosyl-L-methionine = N(2)-methylguanosine(1516) in 16S rRNA + S-adenosyl-L-homocysteine + H(+). Functionally, specifically methylates the guanosine in position 1516 of 16S rRNA. The protein is Ribosomal RNA small subunit methyltransferase J of Marinobacter nauticus (strain ATCC 700491 / DSM 11845 / VT8) (Marinobacter aquaeolei).